Here is a 533-residue protein sequence, read N- to C-terminus: Probable protein kinase UbiB (533 aa).

A helical transmembrane segment spans residues 24 to 44 (LILELPMLPWWLRLLGATLPW). The Protein kinase domain occupies 126–494 (RFEREPLASA…WKGSRHDWLG (369 aa)). ATP contacts are provided by residues 132 to 140 (LASASVAQV) and lysine 154. Catalysis depends on aspartate 289, which acts as the Proton acceptor. The helical transmembrane segment at 510–530 (LGQQLEAWPAWVMLAGGVFLI) threads the bilayer.

It belongs to the ABC1 family. UbiB subfamily.

It localises to the cell inner membrane. The protein operates within cofactor biosynthesis; ubiquinone biosynthesis [regulation]. Its function is as follows. Is probably a protein kinase regulator of UbiI activity which is involved in aerobic coenzyme Q (ubiquinone) biosynthesis. This chain is Probable protein kinase UbiB, found in Pseudomonas aeruginosa (strain UCBPP-PA14).